The following is a 448-amino-acid chain: N-succinylarginine dihydrolase (448 aa).

Residues 19–28, asparagine 110, and 137–138 each bind substrate; these read GGLSYGNVAS and HR. Glutamate 174 is a catalytic residue. Position 214 (arginine 214) interacts with substrate. Histidine 250 is a catalytic residue. Substrate contacts are provided by aspartate 252 and asparagine 365. The active-site Nucleophile is the cysteine 371.

Belongs to the succinylarginine dihydrolase family. In terms of assembly, homodimer.

It carries out the reaction N(2)-succinyl-L-arginine + 2 H2O + 2 H(+) = N(2)-succinyl-L-ornithine + 2 NH4(+) + CO2. It participates in amino-acid degradation; L-arginine degradation via AST pathway; L-glutamate and succinate from L-arginine: step 2/5. In terms of biological role, catalyzes the hydrolysis of N(2)-succinylarginine into N(2)-succinylornithine, ammonia and CO(2). This is N-succinylarginine dihydrolase from Ectopseudomonas mendocina (strain ymp) (Pseudomonas mendocina).